The following is a 355-amino-acid chain: Chorismate synthase (355 aa).

Position 48 (Arg-48) interacts with NADP(+). Residues 125–127 (RSS), 239–240 (NA), Gly-280, 295–299 (KPVAT), and Arg-321 each bind FMN.

The protein belongs to the chorismate synthase family. In terms of assembly, homotetramer. FMNH2 is required as a cofactor.

The catalysed reaction is 5-O-(1-carboxyvinyl)-3-phosphoshikimate = chorismate + phosphate. The protein operates within metabolic intermediate biosynthesis; chorismate biosynthesis; chorismate from D-erythrose 4-phosphate and phosphoenolpyruvate: step 7/7. In terms of biological role, catalyzes the anti-1,4-elimination of the C-3 phosphate and the C-6 proR hydrogen from 5-enolpyruvylshikimate-3-phosphate (EPSP) to yield chorismate, which is the branch point compound that serves as the starting substrate for the three terminal pathways of aromatic amino acid biosynthesis. This reaction introduces a second double bond into the aromatic ring system. This chain is Chorismate synthase, found in Flavobacterium psychrophilum (strain ATCC 49511 / DSM 21280 / CIP 103535 / JIP02/86).